A 238-amino-acid polypeptide reads, in one-letter code: CD63 antigen (238 aa).

Residues 1-11 (MAVEGGMKCVK) lie on the Cytoplasmic side of the membrane. The helical transmembrane segment at 12 to 32 (FLLYVLLLAFCACAVGLIAVG) threads the bilayer. Residues 33–51 (VGAQLVLSQTITHGATPGS) lie on the Extracellular side of the membrane. The chain crosses the membrane as a helical span at residues 52-72 (LLPVVIIAVGAFLFLVAFVGC). At 73–81 (CGTCKENYC) the chain is on the cytoplasmic side. A helical membrane pass occupies residues 82 to 102 (LMITFAIFLSLIMLVEVAAAI). Over 103-203 (AGYVFRDKVM…KIGLWLRKNV (101 aa)) the chain is Extracellular. Asparagine 125, asparagine 130, asparagine 150, and asparagine 172 each carry an N-linked (GlcNAc...) asparagine glycan. Residues 204-224 (LVVAAAALGIAFVEVLGIVFA) form a helical membrane-spanning segment. The Cytoplasmic segment spans residues 225–238 (CCLVKSIRSGYEVM). Positions 234-238 (GYEVM) match the Lysosomal targeting motif motif.

Belongs to the tetraspanin (TM4SF) family. In terms of assembly, interacts with TIMP1 and ITGB1 and recruits TIMP1 to ITGB1. Interacts with CD9. Identified in a complex with CD9 and ITGB3. Interacts with PMEL. Interacts with KDR/VEGFR2; identified in a complex with ITGB1 and KDR/VEGFR2 and is required to recruit KDR to ITGB1 complexes. Interacts with SYT7. Post-translationally, palmitoylated at a low, basal level in unstimulated platelets. The level of palmitoylation increases when platelets are activated by thrombin (in vitro).

The protein resides in the cell membrane. It is found in the lysosome membrane. Its subcellular location is the late endosome membrane. The protein localises to the endosome. It localises to the multivesicular body. The protein resides in the melanosome. It is found in the secreted. Its subcellular location is the extracellular exosome. The protein localises to the cell surface. Functionally, functions as a cell surface receptor for TIMP1 and plays a role in the activation of cellular signaling cascades. Plays a role in the activation of ITGB1 and integrin signaling, leading to the activation of AKT, FAK/PTK2 and MAP kinases. Promotes cell survival, reorganization of the actin cytoskeleton, cell adhesion, spreading and migration, via its role in the activation of AKT and FAK/PTK2. Plays a role in VEGFA signaling via its role in regulating the internalization of KDR/VEGFR2. Plays a role in intracellular vesicular transport processes, and is required for normal trafficking of the PMEL luminal domain that is essential for the development and maturation of melanocytes. Plays a role in the adhesion of leukocytes onto endothelial cells via its role in the regulation of SELP trafficking. May play a role in mast cell degranulation in response to Ms4a2/FceRI stimulation, but not in mast cell degranulation in response to other stimuli. The polypeptide is CD63 antigen (CD63) (Oryctolagus cuniculus (Rabbit)).